The following is a 549-amino-acid chain: Alanine aminotransferase 2-like (549 aa).

Lys367 is subject to N6-(pyridoxal phosphate)lysine.

This sequence belongs to the class-I pyridoxal-phosphate-dependent aminotransferase family. Alanine aminotransferase subfamily. As to quaternary structure, homodimer. Pyridoxal 5'-phosphate serves as cofactor.

It carries out the reaction L-alanine + 2-oxoglutarate = pyruvate + L-glutamate. It functions in the pathway amino-acid degradation; L-alanine degradation via transaminase pathway; pyruvate from L-alanine: step 1/1. Functionally, catalyzes the reversible transamination between alanine and 2-oxoglutarate to form pyruvate and glutamate. The chain is Alanine aminotransferase 2-like (gpt2l) from Danio rerio (Zebrafish).